The primary structure comprises 395 residues: Putative 8-amino-7-oxononanoate synthase (395 aa).

Arg-23 serves as a coordination point for substrate. 110-111 (GY) serves as a coordination point for pyridoxal 5'-phosphate. His-135 provides a ligand contact to substrate. Pyridoxal 5'-phosphate contacts are provided by residues Ser-182, 207-210 (DEAH), and 239-242 (TFSK). Lys-242 carries the post-translational modification N6-(pyridoxal phosphate)lysine. Thr-356 contributes to the substrate binding site.

The protein belongs to the class-II pyridoxal-phosphate-dependent aminotransferase family. BioF subfamily. In terms of assembly, homodimer. Requires pyridoxal 5'-phosphate as cofactor.

It catalyses the reaction 6-carboxyhexanoyl-[ACP] + L-alanine + H(+) = (8S)-8-amino-7-oxononanoate + holo-[ACP] + CO2. The protein operates within cofactor biosynthesis; biotin biosynthesis. Functionally, catalyzes the decarboxylative condensation of pimeloyl-[acyl-carrier protein] and L-alanine to produce 8-amino-7-oxononanoate (AON), [acyl-carrier protein], and carbon dioxide. This is Putative 8-amino-7-oxononanoate synthase (bioF) from Bacillus mycoides (strain KBAB4) (Bacillus weihenstephanensis).